The sequence spans 330 residues: Aspartate--ammonia ligase (330 aa).

The protein belongs to the class-II aminoacyl-tRNA synthetase family. AsnA subfamily.

Its subcellular location is the cytoplasm. It catalyses the reaction L-aspartate + NH4(+) + ATP = L-asparagine + AMP + diphosphate + H(+). It functions in the pathway amino-acid biosynthesis; L-asparagine biosynthesis; L-asparagine from L-aspartate (ammonia route): step 1/1. The chain is Aspartate--ammonia ligase from Pectobacterium carotovorum subsp. carotovorum (strain PC1).